The chain runs to 718 residues: Phospholipid phosphatase-related protein type 3 (718 aa).

Transmembrane regions (helical) follow at residues Leu-18 to Phe-38, Leu-70 to Val-90, and Phe-133 to Leu-153. The N-linked (GlcNAc...) asparagine glycan is linked to Asn-169. Helical transmembrane passes span His-207 to Ser-227, Leu-233 to Ile-253, and Val-263 to Gly-283. The tract at residues Ser-313–Gly-347 is disordered. Over residues Val-314–Thr-323 the composition is skewed to polar residues. Residue Asn-318 is glycosylated (N-linked (GlcNAc...) asparagine). Phosphoserine occurs at positions 322 and 353. Thr-376 is subject to Phosphothreonine. Residues Leu-416–Ala-488 form a disordered region. The residue at position 428 (Ser-428) is a Phosphoserine. The segment covering Met-439–Gly-462 has biased composition (acidic residues). Ser-508 bears the Phosphoserine mark. Over residues Ala-545–Ser-571 the composition is skewed to low complexity. The interval Ala-545 to Ser-577 is disordered. Position 641 is a phosphoserine (Ser-641). Residues Gly-664–Gly-680 show a composition bias toward low complexity. The disordered stretch occupies residues Gly-664–Ala-702.

Belongs to the PA-phosphatase related phosphoesterase family.

Its subcellular location is the membrane. The protein is Phospholipid phosphatase-related protein type 3 of Homo sapiens (Human).